Reading from the N-terminus, the 208-residue chain is Large ribosomal subunit protein uL3 (208 aa).

Glutamine 149 is modified (N5-methylglutamine).

This sequence belongs to the universal ribosomal protein uL3 family. In terms of assembly, part of the 50S ribosomal subunit. Forms a cluster with proteins L14 and L19. In terms of processing, methylated by PrmB.

One of the primary rRNA binding proteins, it binds directly near the 3'-end of the 23S rRNA, where it nucleates assembly of the 50S subunit. The polypeptide is Large ribosomal subunit protein uL3 (Actinobacillus pleuropneumoniae serotype 5b (strain L20)).